Here is an 84-residue protein sequence, read N- to C-terminus: Large ribosomal subunit protein bL27 (84 aa).

Residues 1–22 form a disordered region; that stretch reads MAHKKAGGSTRNGRDSESKRLG.

The protein belongs to the bacterial ribosomal protein bL27 family.

The polypeptide is Large ribosomal subunit protein bL27 (Shewanella frigidimarina (strain NCIMB 400)).